Consider the following 128-residue polypeptide: Gastrotropin (128 aa).

Ala2 carries the post-translational modification N-acetylalanine.

Belongs to the calycin superfamily. Fatty-acid binding protein (FABP) family. Found exclusively in the ileum and to a lesser extent in distal jejunum.

It is found in the cytoplasm. The protein resides in the membrane. In terms of biological role, binds to bile acids and is involved in enterohepatic bile acid metabolism. Required for efficient apical to basolateral transport of conjugated bile acids in ileal enterocytes. Stimulates gastric acid and pepsinogen secretion. The sequence is that of Gastrotropin (FABP6) from Sus scrofa (Pig).